Reading from the N-terminus, the 424-residue chain is Glucan endo-1,3-alpha-glucosidase agn1 (424 aa).

Residues 1–20 (MKLVLFLVLLFSALINLTNA) form the signal peptide.

It belongs to the glycosyl hydrolase 71 family. Monomer. Not glycosylated.

The protein resides in the secreted. Its subcellular location is the cell wall. The catalysed reaction is Endohydrolysis of (1-&gt;3)-alpha-D-glucosidic linkages in isolichenin, pseudonigeran and nigeran.. Its function is as follows. Has a role in cell separation where it is required for the degradation of the cell wall material surrounding the septum (the septum edging) which must be hydrolyzed before full separation of the daughter cells can occur. Hydrolyzes 1,3-alpha-glucan predominantly into pentasaccharides. This Schizosaccharomyces pombe (strain 972 / ATCC 24843) (Fission yeast) protein is Glucan endo-1,3-alpha-glucosidase agn1 (agn1).